A 266-amino-acid polypeptide reads, in one-letter code: Putative carbamate hydrolase RutD (266 aa).

Belongs to the AB hydrolase superfamily. Hydrolase RutD family.

It catalyses the reaction carbamate + 2 H(+) = NH4(+) + CO2. Functionally, involved in pyrimidine catabolism. May facilitate the hydrolysis of carbamate, a reaction that can also occur spontaneously. The protein is Putative carbamate hydrolase RutD of Escherichia coli O45:K1 (strain S88 / ExPEC).